A 231-amino-acid polypeptide reads, in one-letter code: Ribonuclease HI (231 aa).

Residues 1 to 146 (MRERAVAACD…ADRAASQAAV (146 aa)) form the RNase H type-1 domain. Asp10, Glu50, Asp72, and Asp138 together coordinate Mg(2+). Low complexity-rich tracts occupy residues 148 to 157 (QEAAGSALGS) and 166 to 181 (VPAA…SGAA). Disordered stretches follow at residues 148–192 (QEAA…SART) and 212–231 (PIAK…VAAG).

Belongs to the RNase H family. As to quaternary structure, monomer. Requires Mg(2+) as cofactor.

It is found in the cytoplasm. It carries out the reaction Endonucleolytic cleavage to 5'-phosphomonoester.. Endonuclease that specifically degrades the RNA of RNA-DNA hybrids. The protein is Ribonuclease HI (rnhA) of Streptomyces coelicolor (strain ATCC BAA-471 / A3(2) / M145).